Here is a 262-residue protein sequence, read N- to C-terminus: Acyl-[acyl-carrier-protein]--UDP-N-acetylglucosamine O-acyltransferase (262 aa).

This sequence belongs to the transferase hexapeptide repeat family. LpxA subfamily. Homotrimer.

The protein localises to the cytoplasm. The enzyme catalyses a (3R)-hydroxyacyl-[ACP] + UDP-N-acetyl-alpha-D-glucosamine = a UDP-3-O-[(3R)-3-hydroxyacyl]-N-acetyl-alpha-D-glucosamine + holo-[ACP]. Its pathway is glycolipid biosynthesis; lipid IV(A) biosynthesis; lipid IV(A) from (3R)-3-hydroxytetradecanoyl-[acyl-carrier-protein] and UDP-N-acetyl-alpha-D-glucosamine: step 1/6. Functionally, involved in the biosynthesis of lipid A, a phosphorylated glycolipid that anchors the lipopolysaccharide to the outer membrane of the cell. The polypeptide is Acyl-[acyl-carrier-protein]--UDP-N-acetylglucosamine O-acyltransferase (Burkholderia ambifaria (strain ATCC BAA-244 / DSM 16087 / CCUG 44356 / LMG 19182 / AMMD) (Burkholderia cepacia (strain AMMD))).